The chain runs to 104 residues: MIRKAFVMQVNPDAHEEYQRRHNPIWPELEAVLKSHGVHNYAIYLDKARNLLFAMVEIESEERWNAVASTDVCQRWWKYMTDVMPANPDNSPVSSELQEVFYLP.

Y18 provides a ligand contact to substrate. Catalysis depends on H22, which acts as the Proton donor. Residues Y41 and 76–77 each bind substrate; that span reads WW.

It belongs to the rhamnose mutarotase family. Homodimer.

The protein localises to the cytoplasm. It carries out the reaction alpha-L-rhamnose = beta-L-rhamnose. Its pathway is carbohydrate metabolism; L-rhamnose metabolism. Its function is as follows. Involved in the anomeric conversion of L-rhamnose. This chain is L-rhamnose mutarotase, found in Shigella flexneri serotype 5b (strain 8401).